The sequence spans 227 residues: Lectin (227 aa).

An N-terminal signal peptide occupies residues 1–28 (MTMTSTTTKAMAMAAAVLAAAAVAATNA). Gln29 carries the pyrrolidone carboxylic acid modification. Chitin-binding type-1 domains lie at 29 to 70 (QTCG…ACCS), 71 to 113 (SQRC…PCRA), 114 to 156 (DIKC…ACCP), and 157 to 199 (EKRC…GCYK). 16 disulfide bridges follow: Cys31/Cys46, Cys40/Cys52, Cys45/Cys59, Cys63/Cys68, Cys74/Cys89, Cys83/Cys95, Cys88/Cys102, Cys106/Cys111, Cys117/Cys132, Cys126/Cys138, Cys131/Cys145, Cys149/Cys154, Cys160/Cys175, Cys169/Cys181, Cys174/Cys188, and Cys192/Cys197. 38–40 (MIC) is a binding site for substrate. 90-101 (SQYGYCGFGSEY) is a binding site for substrate. 142 to 143 (SE) contacts substrate. Positions 202 to 227 (DGMAAILANNQSVSFEGIIESVAELV) are excised as a propeptide. Residue Asn211 is glycosylated (N-linked (GlcNAc...) asparagine).

N-acetyl-D-glucosamine binding lectin. The sequence is that of Lectin from Oryza sativa subsp. indica (Rice).